We begin with the raw amino-acid sequence, 213 residues long: Pyridoxine/pyridoxamine 5'-phosphate oxidase (213 aa).

Residues 60–65 (RMVLMK), 75–76 (YS), Lys-82, and Gln-104 contribute to the FMN site. Residue Lys-65 participates in substrate binding. Residues Tyr-122, Arg-126, and Ser-130 each coordinate substrate. Residues 139–140 (QS) and Trp-184 contribute to the FMN site. 190-192 (RLH) lines the substrate pocket. Arg-194 contributes to the FMN binding site.

This sequence belongs to the pyridoxamine 5'-phosphate oxidase family. As to quaternary structure, homodimer. Requires FMN as cofactor.

The enzyme catalyses pyridoxamine 5'-phosphate + O2 + H2O = pyridoxal 5'-phosphate + H2O2 + NH4(+). It carries out the reaction pyridoxine 5'-phosphate + O2 = pyridoxal 5'-phosphate + H2O2. Its pathway is cofactor metabolism; pyridoxal 5'-phosphate salvage; pyridoxal 5'-phosphate from pyridoxamine 5'-phosphate: step 1/1. It participates in cofactor metabolism; pyridoxal 5'-phosphate salvage; pyridoxal 5'-phosphate from pyridoxine 5'-phosphate: step 1/1. In terms of biological role, catalyzes the oxidation of either pyridoxine 5'-phosphate (PNP) or pyridoxamine 5'-phosphate (PMP) into pyridoxal 5'-phosphate (PLP). This chain is Pyridoxine/pyridoxamine 5'-phosphate oxidase, found in Rhodopseudomonas palustris (strain BisB18).